An 825-amino-acid chain; its full sequence is KH domain-containing protein YLL032C (825 aa).

The KH domain maps to 482–556 (PAEESFFIPE…ANICLAKNDL (75 aa)). A compositionally biased stretch (low complexity) spans 727-740 (SSKSNTSNSNTNGN). Residues 727 to 766 (SSKSNTSNSNTNGNFRSMNNAKSRTTIDNTSQSGASPQRH) are disordered. Residues 741-762 (FRSMNNAKSRTTIDNTSQSGAS) are compositionally biased toward polar residues. Residue S762 is modified to Phosphoserine.

It localises to the cytoplasm. This Saccharomyces cerevisiae (strain ATCC 204508 / S288c) (Baker's yeast) protein is KH domain-containing protein YLL032C.